The sequence spans 257 residues: Steroid 5-alpha-reductase DET2 (257 aa).

Helical transmembrane passes span 11–31, 47–67, 78–97, 110–130, 151–171, and 200–220; these read FIVF…QFFT, ISPP…TIIV, LAFL…TIIY, FPLN…YIQS, IGLV…GVLL, and IMEW…AFFV.

This sequence belongs to the steroid 5-alpha reductase family. In terms of tissue distribution, mostly expressed in leaves and hypocotyls and, to a lower extent, in stems, cotyledons, roots, seeds and callus.

It is found in the membrane. It catalyses the reaction a 3-oxo-5alpha-steroid + NADP(+) = a 3-oxo-Delta(4)-steroid + NADPH + H(+). The protein operates within plant hormone biosynthesis; brassinosteroid biosynthesis. With respect to regulation, repressed by steroid (4-MA, VG106, PD91, PD17, Finasteride) and non-steroid (AS601811, AFA27, AFA76, AFA131, AFA192) inhibitors; steroid inhibitors are generally more efficient. Functionally, involved in a reduction step in the biosynthesis of the plant steroid, brassinolide (BL). Can use progesterone, testosterone, androstenedione and campestenone as substrate. This is Steroid 5-alpha-reductase DET2 from Solanum lycopersicum (Tomato).